The sequence spans 150 residues: MDINPLLYLQAFNNDATTFNTQGHLLEQQSDSPYFDTFANAMQAYLDTKRGGNDEEGTIIIMDDEDFNDSESLEDFLQMLNDEELNDEFSSDDEPEERVNFHEVNHHEVNHHKINHHEVNHHKINQHEPSENPQATFDITEFIKTEDEED.

A run of 5 repeats spans residues 101-105 (FHEVN), 106-110 (HHEVN), 111-115 (HHKIN), 116-120 (HHEVN), and 121-125 (HHKIN). The interval 101-125 (FHEVNHHEVNHHKINHHEVNHHKIN) is 5 X 5 AA tandem repeats of [FH]-H-[EK]-[IV]-N.

It belongs to the asfivirus D129L family.

This is an uncharacterized protein from African swine fever virus (isolate Tick/Malawi/Lil 20-1/1983) (ASFV).